The sequence spans 401 residues: Nuclear hormone receptor family member nhr-65 (401 aa).

A DNA-binding region (nuclear receptor) is located at residues 10–79 (PERCKVCGDT…AGMSSENFQF (70 aa)). 2 consecutive NR C4-type zinc fingers follow at residues 13 to 33 (CKVC…CRAC) and 49 to 67 (CENH…LQRC). The 267-residue stretch at 132–398 (KAEKLIEFGS…FSHPEFIQDA (267 aa)) folds into the NR LBD domain.

It belongs to the nuclear hormone receptor family.

Its subcellular location is the nucleus. Functionally, orphan nuclear receptor. The protein is Nuclear hormone receptor family member nhr-65 (nhr-65) of Caenorhabditis elegans.